Consider the following 524-residue polypeptide: RNA-binding protein 39 (524 aa).

Residues 1-146 form a disordered region; it reads MADDIDIEAM…PVREPIDNLT (146 aa). Ala2 bears the N-acetylalanine mark. Over residues 14-32 the composition is skewed to basic and acidic residues; the sequence is PYKKDENKLSSANGHEERS. Basic residues-rich tracts occupy residues 33–56 and 64–95; these read KKRK…KERK and KKSK…RGRY. Tyr95 is modified (phosphotyrosine). 2 positions are modified to phosphoserine: Ser97 and Ser100. Lys111 is covalently cross-linked (Glycyl lysine isopeptide (Lys-Gly) (interchain with G-Cter in SUMO2)). At Ser117 the chain carries Phosphoserine. Lys119 participates in a covalent cross-link: Glycyl lysine isopeptide (Lys-Gly) (interchain with G-Cter in SUMO2). Over residues 119–130 the composition is skewed to basic residues; it reads KLSRRRSRSKSP. Ser121 and Ser136 each carry phosphoserine. Basic and acidic residues predominate over residues 131 to 146; sequence FRKDKSPVREPIDNLT. The residue at position 146 (Thr146) is a Phosphothreonine. The 78-residue stretch at 153–230 folds into the RRM 1 domain; the sequence is RTVFCMQLAA…VPIIVQASQA (78 aa). Lys244 participates in a covalent cross-link: Glycyl lysine isopeptide (Lys-Gly) (interchain with G-Cter in SUMO2). An RRM 2 domain is found at 250–328; it reads MRLYVGSLHF…RPMKVGHVTE (79 aa). Positions 291-355 are activating domain; it reads KGYGFITFSD…RTGIDLGTTG (65 aa). The interaction with JUN stretch occupies residues 291–400; that stretch reads KGYGFITFSD…ADLQTRLSQQ (110 aa). Phosphoserine is present on residues Ser334, Ser337, and Ser341. The interaction with ESR1 and ESR2 stretch occupies residues 355–400; sequence GRLQLMARLAEGTGLQIPPAAQQALQMSGSLAFGAVADLQTRLSQQ. Residues 400–524 are interaction with NCOA6; the sequence is QTEASALAAA…ATQLLVPSRR (125 aa). One can recognise an RRM 3 domain in the interval 439–502; the sequence is EIKDDVIEEC…KMITAAYVPL (64 aa).

The protein belongs to the splicing factor SR family. As to quaternary structure, interacts with NCOA6 and JUN. Interacts with ESR1 and ESR2, in the presence of estradiol (E2). Interacts with RSRC1 (via Arg/Ser-rich domain). Interacts with SF3B1. Interacts with ZNF106 (via N-terminus).

It localises to the nucleus speckle. In terms of biological role, RNA-binding protein that acts as a pre-mRNA splicing factor. Acts by promoting exon inclusion via regulation of exon cassette splicing. Also acts as a transcriptional coactivator for steroid nuclear receptors ESR1/ER-alpha and ESR2/ER-beta, and JUN/AP-1, independently of the pre-mRNA splicing factor activity. The polypeptide is RNA-binding protein 39 (RBM39) (Pongo abelii (Sumatran orangutan)).